A 236-amino-acid chain; its full sequence is 2,3,4,5-tetrahydropyridine-2,6-dicarboxylate N-acetyltransferase (236 aa).

The protein belongs to the transferase hexapeptide repeat family. DapH subfamily.

It carries out the reaction (S)-2,3,4,5-tetrahydrodipicolinate + acetyl-CoA + H2O = L-2-acetamido-6-oxoheptanedioate + CoA. Its pathway is amino-acid biosynthesis; L-lysine biosynthesis via DAP pathway; LL-2,6-diaminopimelate from (S)-tetrahydrodipicolinate (acetylase route): step 1/3. In terms of biological role, catalyzes the transfer of an acetyl group from acetyl-CoA to tetrahydrodipicolinate. This chain is 2,3,4,5-tetrahydropyridine-2,6-dicarboxylate N-acetyltransferase, found in Geobacillus sp. (strain WCH70).